The following is a 670-amino-acid chain: uncharacterized protein (670 aa).

A run of 10 helical transmembrane segments spans residues 23–42 (YALRNTIAMCLALTVAYYLN), 47–69 (YWAMTSAAVVSFPTVGGVISKSL), 76–98 (LLGAIAALLLAGHTLNEPWFFLL), 118–140 (VAYAFQLAGYTAAIIAFPMVNIT), 153–170 (VCEVIVGILCGGMMMMIL), 381–403 (QWDAGANALTLAAISCVLYSAVA), 410–432 (SLLMRTLVLLSLFSFVVKFGLMV), 437–454 (LWQFLLFLFPLLATMQLL), 461–483 (FAALWGQLIVFMGSFIAVTNPPV), and 493–510 (NLAKIVGVALAWLAFAIL).

It belongs to the aromatic acid exporter ArAE (TC 2.A.85) family.

It is found in the cell membrane. This is an uncharacterized protein from Escherichia coli O157:H7.